Reading from the N-terminus, the 296-residue chain is Nitrogenase iron protein 1 (296 aa).

11–18 (GKGGIGKS) contributes to the ATP binding site. C99 is a binding site for [4Fe-4S] cluster. An ADP-ribosylarginine; by dinitrogenase reductase ADP-ribosyltransferase modification is found at R102. A [4Fe-4S] cluster-binding site is contributed by C133.

The protein belongs to the NifH/BchL/ChlL family. In terms of assembly, homodimer. [4Fe-4S] cluster is required as a cofactor. The reversible ADP-ribosylation of Arg-102 inactivates the nitrogenase reductase and regulates nitrogenase activity.

The enzyme catalyses N2 + 8 reduced [2Fe-2S]-[ferredoxin] + 16 ATP + 16 H2O = H2 + 8 oxidized [2Fe-2S]-[ferredoxin] + 2 NH4(+) + 16 ADP + 16 phosphate + 6 H(+). In terms of biological role, the key enzymatic reactions in nitrogen fixation are catalyzed by the nitrogenase complex, which has 2 components: the iron protein and the molybdenum-iron protein. This chain is Nitrogenase iron protein 1 (nifH1), found in Azorhizobium caulinodans (strain ATCC 43989 / DSM 5975 / JCM 20966 / LMG 6465 / NBRC 14845 / NCIMB 13405 / ORS 571).